The primary structure comprises 575 residues: Bifunctional decalin synthase calF (575 aa).

An N-terminal signal peptide occupies residues 1–18 (MSFKPLLLSLSLLSPALG). N-linked (GlcNAc...) asparagine glycosylation is found at N46, N103, N127, N175, N268, N308, N359, N425, and N485. The FAD-binding PCMH-type domain maps to 118–297 (LGNYASYSIN…LSMTTKVFQD (180 aa)).

Belongs to the oxygen-dependent FAD-linked oxidoreductase family.

It functions in the pathway secondary metabolite biosynthesis. Bifunctional decaline synthase; part of the gene cluster that mediates the biosynthesis of calbistrin A and related compounds. Calbistrin A is a secondary metabolite with an interesting structure that was recently found to have bioactivity against leukemia cells. It consists of two polyketides linked by an ester bond: a bicyclic decalin containing polyketide and a linear 12 carbon dioic acid structure. The polyketide synthase calA is probably responsible for forming the decalin moiety. Because calA lacks a designated enoylreductase (ER) domain, the required activity is provided by the trans-enoyl reductase calK. Following release from the PKS, calF then probably catalyzes the oxidation and the subsequent Diels Alder cycloisomerization that lead to the formation of the decalin moiety. The decalin polyketide backbone includes two C-methyl groups, at C7 and C11 in backbone, of which the C7 position is probably methylated by the methyltransferase domain of calA. A candidate for adding the methyl group at C11, if not done by CalA, is the cluster methyltransferase calH. Several additional tailoring enzymes within the cluster could be involved in the modification of the decalin polyketide product. Those include the 3 cytochrome P450 monooxygenases CalE, CalG and CalL, of which one might be responsible for the introduction of the extra hydroxyl group attached to the backbone of the decalin moiety, at position C9 in the backbone, that allows for attachment of the linear moiety. One tailoring enzyme activity that is expected to be involved in biosynthesis of calbistrin is an acyltransferase for connecting the two polyketide synthase products, and which could be performed by the cluster acyltransferase calJ. The enzyme responsible for the biosynthesis of the linear moiety, probably a second PKS, has not been identified yet. In Penicillium decumbens, this protein is Bifunctional decalin synthase calF.